The chain runs to 214 residues: GTP-binding nuclear protein GSP1/Ran (214 aa).

A Small GTPase Ran-type domain is found at glutamate 4–asparagine 168. Aspartate 15–threonine 22 lines the GTP pocket. The interval lysine 34 to valine 42 is switch-I. GTP contacts are provided by residues glycine 65, asparagine 119–aspartate 122, and serine 147–lysine 149. Residues glycine 65–glutamine 81 form a switch-II region.

The protein belongs to the small GTPase superfamily. Ran family. In terms of assembly, found in a nuclear export complex with RanGTP, exportin and pre-miRNA.

Its subcellular location is the nucleus. In terms of biological role, GTP-binding protein involved in nucleocytoplasmic transport. Required for the import of protein into the nucleus and also for RNA export. Involved in chromatin condensation and control of cell cycle. This Candida glabrata (strain ATCC 2001 / BCRC 20586 / JCM 3761 / NBRC 0622 / NRRL Y-65 / CBS 138) (Yeast) protein is GTP-binding nuclear protein GSP1/Ran (GSP1).